The sequence spans 185 residues: Ribosome-recycling factor (185 aa).

It belongs to the RRF family.

It is found in the cytoplasm. In terms of biological role, responsible for the release of ribosomes from messenger RNA at the termination of protein biosynthesis. May increase the efficiency of translation by recycling ribosomes from one round of translation to another. This is Ribosome-recycling factor from Streptococcus pyogenes serotype M28 (strain MGAS6180).